The sequence spans 407 residues: Tyrosine--tRNA ligase (407 aa).

Y35 contributes to the L-tyrosine binding site. Positions 40 to 49 (PTADSLHVGH) match the 'HIGH' region motif. Residues Y168 and Q172 each contribute to the L-tyrosine site. The 'KMSKS' region motif lies at 228–232 (KMGKT). Position 231 (K231) interacts with ATP. The 65-residue stretch at 341–405 (NSLVDLLAKC…RGKKNFNRIV (65 aa)) folds into the S4 RNA-binding domain.

This sequence belongs to the class-I aminoacyl-tRNA synthetase family. TyrS type 1 subfamily. As to quaternary structure, homodimer.

It is found in the cytoplasm. It carries out the reaction tRNA(Tyr) + L-tyrosine + ATP = L-tyrosyl-tRNA(Tyr) + AMP + diphosphate + H(+). Functionally, catalyzes the attachment of tyrosine to tRNA(Tyr) in a two-step reaction: tyrosine is first activated by ATP to form Tyr-AMP and then transferred to the acceptor end of tRNA(Tyr). The sequence is that of Tyrosine--tRNA ligase from Clostridium botulinum (strain Loch Maree / Type A3).